A 1435-amino-acid polypeptide reads, in one-letter code: Gag-Pol polyprotein (1435 aa).

Gly-2 carries the N-myristoyl glycine; by host lipid modification. The interval 7-31 (VLSAGELDKWEKIRLRPGGKKQYRL) is interaction with Gp41. Residues 8-43 (LSAGELDKWEKIRLRPGGKKQYRLKHIVWASRELER) form an interaction with host CALM1 region. Residues 12 to 19 (ELDKWEKI) are interaction with host AP3D1. Residues 14–33 (DKWEKIRLRPGGKKQYRLKH) form an interaction with membrane phosphatidylinositol 4,5-bisphosphate and RNA region. The short motif at 16–22 (WEKIRLR) is the Nuclear export signal element. A Nuclear localization signal motif is present at residues 26–32 (KKQYRLK). The interval 73-77 (EELRS) is interaction with membrane phosphatidylinositol 4,5-bisphosphate. The tract at residues 106 to 128 (EEQNKSKKKAQQAAADTGNSSQV) is disordered. Phosphotyrosine; by host is present on Tyr-132. The interval 189-227 (NTVGGHQAAMQMLKETINEEAAEWDRLHPVHAGPIAPGQ) is interaction with human PPIA/CYPA and NUP153. Residues 277 to 363 (YSPTSILDIR…GGPGHKARVL (87 aa)) form a dimerization/Multimerization of capsid protein p24 region. 2 CCHC-type zinc fingers span residues 390–407 (VKCF…NCRA) and 411–428 (KGCW…DCTE). The dimerization of protease stretch occupies residues 489 to 493 (PQITL). Residues 508–577 (KEALLDTGAD…TPVNIIGRNL (70 aa)) enclose the Peptidase A2 domain. Asp-513 (for protease activity; shared with dimeric partner) is an active-site residue. Dimerization of protease stretches follow at residues 537–543 (GIGGFIK) and 576–588 (NLLT…LNFP). The region spanning 631–821 (EGKISKIGPE…PPFLWMGYEL (191 aa)) is the Reverse transcriptase domain. Positions 697, 772, and 773 each coordinate Mg(2+). The tract at residues 814-822 (FLWMGYELH) is RT 'primer grip'. The Tryptophan repeat motif motif lies at 985-1001 (WETWWTEYWQATWIPEW). Residues 1021-1144 (IIGAETFYVD…VDKLVSAGIR (124 aa)) form the RNase H type-1 domain. Mg(2+) is bound by residues Asp-1030, Glu-1065, Asp-1085, and Asp-1136. The Integrase-type zinc-finger motif lies at 1150 to 1191 (DGIDKAQEEHEKYHSNWRAMASDFNLPPVVAKEIVASCDKCQ). 4 residues coordinate Zn(2+): His-1159, His-1163, Cys-1187, and Cys-1190. Positions 1201–1351 (VDCSPGIWQL…SAGERIVDII (151 aa)) constitute an Integrase catalytic domain. 3 residues coordinate Mg(2+): Asp-1211, Asp-1263, and Glu-1299. Positions 1370–1417 (FRVYYRDSRDPLWKGPAKLLWKGEGAVVIQDNSDIKVVPRRKAKIIRD) form a DNA-binding region, integrase-type.

Homotrimer; further assembles as hexamers of trimers. Interacts with gp41 (via C-terminus). Interacts with host CALM1; this interaction induces a conformational change in the Matrix protein, triggering exposure of the myristate group. Interacts with host AP3D1; this interaction allows the polyprotein trafficking to multivesicular bodies during virus assembly. Part of the pre-integration complex (PIC) which is composed of viral genome, matrix protein, Vpr and integrase. As to quaternary structure, homodimer; the homodimer further multimerizes as homohexamers or homopentamers. Interacts with human PPIA/CYPA; This interaction stabilizes the capsid. Interacts with human NUP153. Interacts with host PDZD8; this interaction stabilizes the capsid. Interacts with monkey TRIM5; this interaction destabilizes the capsid. In terms of assembly, homodimer, whose active site consists of two apposed aspartic acid residues. Heterodimer of p66 RT and p51 RT (RT p66/p51). Heterodimerization of RT is essential for DNA polymerase activity. The overall folding of the subdomains is similar in p66 RT and p51 RT but the spatial arrangements of the subdomains are dramatically different. As to quaternary structure, homotetramer; may further associate as a homohexadecamer. Part of the pre-integration complex (PIC) which is composed of viral genome, matrix protein, Vpr and integrase. Interacts with human SMARCB1/INI1 and human PSIP1/LEDGF isoform 1. Interacts with human KPNA3; this interaction might play a role in nuclear import of the pre-integration complex. Interacts with human NUP153; this interaction might play a role in nuclear import of the pre-integration complex. Mg(2+) is required as a cofactor. In terms of processing, specific enzymatic cleavages by the viral protease yield mature proteins. The protease is released by autocatalytic cleavage. The polyprotein is cleaved during and after budding, this process is termed maturation. Proteolytic cleavage of p66 RT removes the RNase H domain to yield the p51 RT subunit. Nucleocapsid protein p7 might be further cleaved after virus entry. Tyrosine phosphorylated presumably in the virion by a host kinase. Phosphorylation is apparently not a major regulator of membrane association. Post-translationally, phosphorylated possibly by host MAPK1; this phosphorylation is necessary for Pin1-mediated virion uncoating. In terms of processing, methylated by host PRMT6, impairing its function by reducing RNA annealing and the initiation of reverse transcription.

Its subcellular location is the host cell membrane. It localises to the host endosome. The protein resides in the host multivesicular body. The protein localises to the virion membrane. It is found in the host nucleus. Its subcellular location is the host cytoplasm. It localises to the virion. It carries out the reaction Specific for a P1 residue that is hydrophobic, and P1' variable, but often Pro.. The enzyme catalyses Endohydrolysis of RNA in RNA/DNA hybrids. Three different cleavage modes: 1. sequence-specific internal cleavage of RNA. Human immunodeficiency virus type 1 and Moloney murine leukemia virus enzymes prefer to cleave the RNA strand one nucleotide away from the RNA-DNA junction. 2. RNA 5'-end directed cleavage 13-19 nucleotides from the RNA end. 3. DNA 3'-end directed cleavage 15-20 nucleotides away from the primer terminus.. The catalysed reaction is 3'-end directed exonucleolytic cleavage of viral RNA-DNA hybrid.. It catalyses the reaction DNA(n) + a 2'-deoxyribonucleoside 5'-triphosphate = DNA(n+1) + diphosphate. With respect to regulation, protease: The viral protease is inhibited by many synthetic protease inhibitors (PIs), such as amprenavir, atazanavir, indinavir, loprinavir, nelfinavir, ritonavir and saquinavir. Use of protease inhibitors in tritherapy regimens permit more ambitious therapeutic strategies. Reverse transcriptase/ribonuclease H: RT can be inhibited either by nucleoside RT inhibitors (NRTIs) or by non nucleoside RT inhibitors (NNRTIs). NRTIs act as chain terminators, whereas NNRTIs inhibit DNA polymerization by binding a small hydrophobic pocket near the RT active site and inducing an allosteric change in this region. Classical NRTIs are abacavir, adefovir (PMEA), didanosine (ddI), lamivudine (3TC), stavudine (d4T), tenofovir (PMPA), zalcitabine (ddC), and zidovudine (AZT). Classical NNRTIs are atevirdine (BHAP U-87201E), delavirdine, efavirenz (DMP-266), emivirine (I-EBU), and nevirapine (BI-RG-587). The tritherapies used as a basic effective treatment of AIDS associate two NRTIs and one NNRTI. In terms of biological role, mediates, with Gag polyprotein, the essential events in virion assembly, including binding the plasma membrane, making the protein-protein interactions necessary to create spherical particles, recruiting the viral Env proteins, and packaging the genomic RNA via direct interactions with the RNA packaging sequence (Psi). Gag-Pol polyprotein may regulate its own translation, by the binding genomic RNA in the 5'-UTR. At low concentration, the polyprotein would promote translation, whereas at high concentration, the polyprotein would encapsidate genomic RNA and then shut off translation. Targets the polyprotein to the plasma membrane via a multipartite membrane-binding signal, that includes its myristoylated N-terminus. Matrix protein is part of the pre-integration complex. Implicated in the release from host cell mediated by Vpu. Binds to RNA. Its function is as follows. Forms the conical core that encapsulates the genomic RNA-nucleocapsid complex in the virion. Most core are conical, with only 7% tubular. The core is constituted by capsid protein hexamer subunits. The core is disassembled soon after virion entry. Host restriction factors such as TRIM5-alpha or TRIMCyp bind retroviral capsids and cause premature capsid disassembly, leading to blocks in reverse transcription. Capsid restriction by TRIM5 is one of the factors which restricts HIV-1 to the human species. Host PIN1 apparently facilitates the virion uncoating. On the other hand, interactions with PDZD8 or CYPA stabilize the capsid. Functionally, encapsulates and protects viral dimeric unspliced genomic RNA (gRNA). Binds these RNAs through its zinc fingers. Acts as a nucleic acid chaperone which is involved in rearangement of nucleic acid secondary structure during gRNA retrotranscription. Also facilitates template switch leading to recombination. As part of the polyprotein, participates in gRNA dimerization, packaging, tRNA incorporation and virion assembly. In terms of biological role, aspartyl protease that mediates proteolytic cleavages of Gag and Gag-Pol polyproteins during or shortly after the release of the virion from the plasma membrane. Cleavages take place as an ordered, step-wise cascade to yield mature proteins. This process is called maturation. Displays maximal activity during the budding process just prior to particle release from the cell. Also cleaves Nef and Vif, probably concomitantly with viral structural proteins on maturation of virus particles. Hydrolyzes host EIF4GI and PABP1 in order to shut off the capped cellular mRNA translation. The resulting inhibition of cellular protein synthesis serves to ensure maximal viral gene expression and to evade host immune response. Also mediates cleavage of host YTHDF3. Mediates cleavage of host CARD8, thereby activating the CARD8 inflammasome, leading to the clearance of latent HIV-1 in patient CD4(+) T-cells after viral reactivation; in contrast, HIV-1 can evade CARD8-sensing when its protease remains inactive in infected cells prior to viral budding. Multifunctional enzyme that converts the viral RNA genome into dsDNA in the cytoplasm, shortly after virus entry into the cell. This enzyme displays a DNA polymerase activity that can copy either DNA or RNA templates, and a ribonuclease H (RNase H) activity that cleaves the RNA strand of RNA-DNA heteroduplexes in a partially processive 3' to 5' endonucleasic mode. Conversion of viral genomic RNA into dsDNA requires many steps. A tRNA(3)-Lys binds to the primer-binding site (PBS) situated at the 5'-end of the viral RNA. RT uses the 3' end of the tRNA primer to perform a short round of RNA-dependent minus-strand DNA synthesis. The reading proceeds through the U5 region and ends after the repeated (R) region which is present at both ends of viral RNA. The portion of the RNA-DNA heteroduplex is digested by the RNase H, resulting in a ssDNA product attached to the tRNA primer. This ssDNA/tRNA hybridizes with the identical R region situated at the 3' end of viral RNA. This template exchange, known as minus-strand DNA strong stop transfer, can be either intra- or intermolecular. RT uses the 3' end of this newly synthesized short ssDNA to perform the RNA-dependent minus-strand DNA synthesis of the whole template. RNase H digests the RNA template except for two polypurine tracts (PPTs) situated at the 5'-end and near the center of the genome. It is not clear if both polymerase and RNase H activities are simultaneous. RNase H probably can proceed both in a polymerase-dependent (RNA cut into small fragments by the same RT performing DNA synthesis) and a polymerase-independent mode (cleavage of remaining RNA fragments by free RTs). Secondly, RT performs DNA-directed plus-strand DNA synthesis using the PPTs that have not been removed by RNase H as primers. PPTs and tRNA primers are then removed by RNase H. The 3' and 5' ssDNA PBS regions hybridize to form a circular dsDNA intermediate. Strand displacement synthesis by RT to the PBS and PPT ends produces a blunt ended, linear dsDNA copy of the viral genome that includes long terminal repeats (LTRs) at both ends. Its function is as follows. Catalyzes viral DNA integration into the host chromosome, by performing a series of DNA cutting and joining reactions. This enzyme activity takes place after virion entry into a cell and reverse transcription of the RNA genome in dsDNA. The first step in the integration process is 3' processing. This step requires a complex comprising the viral genome, matrix protein, Vpr and integrase. This complex is called the pre-integration complex (PIC). The integrase protein removes 2 nucleotides from each 3' end of the viral DNA, leaving recessed CA OH's at the 3' ends. In the second step, the PIC enters cell nucleus. This process is mediated through integrase and Vpr proteins, and allows the virus to infect a non dividing cell. This ability to enter the nucleus is specific of lentiviruses, other retroviruses cannot and rely on cell division to access cell chromosomes. In the third step, termed strand transfer, the integrase protein joins the previously processed 3' ends to the 5' ends of strands of target cellular DNA at the site of integration. The 5'-ends are produced by integrase-catalyzed staggered cuts, 5 bp apart. A Y-shaped, gapped, recombination intermediate results, with the 5'-ends of the viral DNA strands and the 3' ends of target DNA strands remaining unjoined, flanking a gap of 5 bp. The last step is viral DNA integration into host chromosome. This involves host DNA repair synthesis in which the 5 bp gaps between the unjoined strands are filled in and then ligated. Since this process occurs at both cuts flanking the HIV genome, a 5 bp duplication of host DNA is produced at the ends of HIV-1 integration. Alternatively, Integrase may catalyze the excision of viral DNA just after strand transfer, this is termed disintegration. In Homo sapiens (Human), this protein is Gag-Pol polyprotein (gag-pol).